A 182-amino-acid chain; its full sequence is Ribulose bisphosphate carboxylase small subunit, chloroplastic (182 aa).

The transit peptide at 1 to 58 (MACSMISSATVAAVSRASPAQSSMVAPFTCLKSTSAFPVTQKTNNDITSIASNGGRVQ) directs the protein to the chloroplast.

This sequence belongs to the RuBisCO small chain family. Heterohexadecamer of 8 large and 8 small subunits.

It is found in the plastid. It localises to the chloroplast. In terms of biological role, ruBisCO catalyzes two reactions: the carboxylation of D-ribulose 1,5-bisphosphate, the primary event in carbon dioxide fixation, as well as the oxidative fragmentation of the pentose substrate. Both reactions occur simultaneously and in competition at the same active site. Although the small subunit is not catalytic it is essential for maximal activity. The chain is Ribulose bisphosphate carboxylase small subunit, chloroplastic from Betula pendula (European white birch).